Here is a 296-residue protein sequence, read N- to C-terminus: Light-independent protochlorophyllide reductase iron-sulfur ATP-binding protein (296 aa).

ATP is bound by residues G39 to T44 and K68. A Mg(2+)-binding site is contributed by S43. [4Fe-4S] cluster contacts are provided by C124 and C158. Residue N209 to R210 participates in ATP binding.

It belongs to the NifH/BchL/ChlL family. Homodimer. Protochlorophyllide reductase is composed of three subunits; ChlL, ChlN and ChlB. It depends on [4Fe-4S] cluster as a cofactor.

It carries out the reaction chlorophyllide a + oxidized 2[4Fe-4S]-[ferredoxin] + 2 ADP + 2 phosphate = protochlorophyllide a + reduced 2[4Fe-4S]-[ferredoxin] + 2 ATP + 2 H2O. It functions in the pathway porphyrin-containing compound metabolism; chlorophyll biosynthesis (light-independent). Functionally, component of the dark-operative protochlorophyllide reductase (DPOR) that uses Mg-ATP and reduced ferredoxin to reduce ring D of protochlorophyllide (Pchlide) to form chlorophyllide a (Chlide). This reaction is light-independent. The L component serves as a unique electron donor to the NB-component of the complex, and binds Mg-ATP. The chain is Light-independent protochlorophyllide reductase iron-sulfur ATP-binding protein from Prochlorococcus marinus (strain MIT 9303).